The sequence spans 565 residues: Periplasmic trehalase (565 aa).

The signal sequence occupies residues 1–30; that stretch reads MKSPAPSRPQKMALIPACIFLCFAALSVQA. Residues Arg152, 159–160, Asn196, 205–207, 277–279, and Gly310 each bind substrate; these read WD, RSQ, and RPE. Residues Asp312 and Glu496 each act as proton donor/acceptor in the active site. A substrate-binding site is contributed by Glu511. The tract at residues 538–565 is disordered; that stretch reads PCDNVPATRPTVKSATTQPSTKEAQPTP. Over residues 548-565 the composition is skewed to polar residues; it reads TVKSATTQPSTKEAQPTP.

The protein belongs to the glycosyl hydrolase 37 family. In terms of assembly, monomer.

It localises to the periplasm. It catalyses the reaction alpha,alpha-trehalose + H2O = alpha-D-glucose + beta-D-glucose. Functionally, provides the cells with the ability to utilize trehalose at high osmolarity by splitting it into glucose molecules that can subsequently be taken up by the phosphotransferase-mediated uptake system. This Escherichia coli (strain K12 / MC4100 / BW2952) protein is Periplasmic trehalase.